A 175-amino-acid polypeptide reads, in one-letter code: Riboflavin kinase (175 aa).

CDP is bound at residue 54–59; sequence GLGEGK. T83 and N85 together coordinate Mg(2+). T142 and E150 together coordinate FMN. A CDP-binding site is contributed by 155 to 158; sequence FHLR.

It belongs to the archaeal riboflavin kinase family. Mg(2+) serves as cofactor.

The enzyme catalyses riboflavin + CTP = CDP + FMN + H(+). It participates in cofactor biosynthesis; FMN biosynthesis; FMN from riboflavin (CTP route): step 1/1. In terms of biological role, catalyzes the CTP-dependent phosphorylation of riboflavin (vitamin B2) to form flavin mononucleotide (FMN). The polypeptide is Riboflavin kinase (Saccharolobus solfataricus (strain ATCC 35092 / DSM 1617 / JCM 11322 / P2) (Sulfolobus solfataricus)).